Here is a 485-residue protein sequence, read N- to C-terminus: NADH-quinone oxidoreductase subunit N (485 aa).

14 helical membrane-spanning segments follow: residues 8–28 (LIAL…MLSI), 35–55 (FLNA…LWFV), 71–91 (GFAM…CTFA), 105–125 (FYLL…ANHL), 127–147 (SLFL…GYAF), 159–179 (YTIL…LVYA), 203–223 (LLAG…LVPF), 235–255 (PAPV…GVVM), 271–291 (VVLA…ALSQ), 297–317 (LLGY…IALQ), 326–346 (VGGY…VVSL), 373–393 (AAVM…LGFI), 408–430 (WWLV…RVAV), and 455–475 (IVVL…QPLI).

Belongs to the complex I subunit 2 family. NDH-1 is composed of 13 different subunits. Subunits NuoA, H, J, K, L, M, N constitute the membrane sector of the complex.

It is found in the cell inner membrane. It catalyses the reaction a quinone + NADH + 5 H(+)(in) = a quinol + NAD(+) + 4 H(+)(out). NDH-1 shuttles electrons from NADH, via FMN and iron-sulfur (Fe-S) centers, to quinones in the respiratory chain. The immediate electron acceptor for the enzyme in this species is believed to be ubiquinone. Couples the redox reaction to proton translocation (for every two electrons transferred, four hydrogen ions are translocated across the cytoplasmic membrane), and thus conserves the redox energy in a proton gradient. The chain is NADH-quinone oxidoreductase subunit N from Shigella boydii serotype 18 (strain CDC 3083-94 / BS512).